A 99-amino-acid polypeptide reads, in one-letter code: Glycine-rich protein (99 aa).

Residues 1-18 form the signal peptide; it reads MKSMIAVLLLALVATSMA.

It belongs to the non-disulfide-bridged peptide (NDBP) superfamily. Expressed by the venom gland.

It is found in the secreted. This chain is Glycine-rich protein, found in Lychas mucronatus (Chinese swimming scorpion).